A 142-amino-acid chain; its full sequence is Large ribosomal subunit protein uL22c (142 aa).

The protein belongs to the universal ribosomal protein uL22 family. As to quaternary structure, part of the 50S ribosomal subunit.

It localises to the plastid. The protein resides in the chloroplast. Functionally, this protein binds specifically to 23S rRNA. Its function is as follows. The globular domain of the protein is located near the polypeptide exit tunnel on the outside of the subunit, while an extended beta-hairpin is found that lines the wall of the exit tunnel in the center of the 70S ribosome. This Pinus koraiensis (Korean pine) protein is Large ribosomal subunit protein uL22c (rpl22).